We begin with the raw amino-acid sequence, 248 residues long: Probable phosphatase VFMJ11_A0899 (248 aa).

His8, His10, His16, His41, Glu74, His101, His131, Asp193, and His195 together coordinate Zn(2+).

This sequence belongs to the PHP family. The cofactor is Zn(2+).

This chain is Probable phosphatase VFMJ11_A0899, found in Aliivibrio fischeri (strain MJ11) (Vibrio fischeri).